The following is a 193-amino-acid chain: dTTP/UTP pyrophosphatase (193 aa).

The active-site Proton acceptor is the aspartate 70.

Belongs to the Maf family. YhdE subfamily. A divalent metal cation serves as cofactor.

The protein localises to the cytoplasm. The catalysed reaction is dTTP + H2O = dTMP + diphosphate + H(+). It carries out the reaction UTP + H2O = UMP + diphosphate + H(+). Functionally, nucleoside triphosphate pyrophosphatase that hydrolyzes dTTP and UTP. May have a dual role in cell division arrest and in preventing the incorporation of modified nucleotides into cellular nucleic acids. The protein is dTTP/UTP pyrophosphatase of Ruminiclostridium cellulolyticum (strain ATCC 35319 / DSM 5812 / JCM 6584 / H10) (Clostridium cellulolyticum).